Reading from the N-terminus, the 456-residue chain is Probable glycine dehydrogenase (decarboxylating) subunit 1 (456 aa).

This sequence belongs to the GcvP family. N-terminal subunit subfamily. The glycine cleavage system is composed of four proteins: P, T, L and H. In this organism, the P 'protein' is a heterodimer of two subunits.

It carries out the reaction N(6)-[(R)-lipoyl]-L-lysyl-[glycine-cleavage complex H protein] + glycine + H(+) = N(6)-[(R)-S(8)-aminomethyldihydrolipoyl]-L-lysyl-[glycine-cleavage complex H protein] + CO2. The glycine cleavage system catalyzes the degradation of glycine. The P protein binds the alpha-amino group of glycine through its pyridoxal phosphate cofactor; CO(2) is released and the remaining methylamine moiety is then transferred to the lipoamide cofactor of the H protein. The sequence is that of Probable glycine dehydrogenase (decarboxylating) subunit 1 from Legionella pneumophila (strain Lens).